A 251-amino-acid chain; its full sequence is Segregation and condensation protein A (251 aa).

It belongs to the ScpA family. Component of a cohesin-like complex composed of ScpA, ScpB and the Smc homodimer, in which ScpA and ScpB bind to the head domain of Smc. The presence of the three proteins is required for the association of the complex with DNA.

It is found in the cytoplasm. Functionally, participates in chromosomal partition during cell division. May act via the formation of a condensin-like complex containing Smc and ScpB that pull DNA away from mid-cell into both cell halves. This Exiguobacterium sibiricum (strain DSM 17290 / CCUG 55495 / CIP 109462 / JCM 13490 / 255-15) protein is Segregation and condensation protein A.